The chain runs to 244 residues: MLRVRDDLPPFLKNYLPDGHRNGRPFVTLTYAQSIDAKIAKQRGVRTTISHIETKEMTHYLRYFHDGILIGSGTVLADDPGLNCKWIGPNNDPDESMEEKSPRPIILDPKLKWKYSGSKMEELCNQGMGKPPIVITTKTPKVKEANVEYMIMEPDANDRISWKSILDTLRRNYDMKSVMIEGGSHVINQLLMCSDLIDSLIVTIGSIYLGSEGVTVSPPDEVKLKDISWWKGTSDVVMCSRLQN.

Residues Thr74, Asp78, Ile160, and 183 to 187 each bind NADP(+); that span reads GSHVI.

The protein belongs to the HTP reductase family. As to quaternary structure, homodimer.

The catalysed reaction is 2,5-diamino-6-(1-D-ribitylamino)pyrimidin-4(3H)-one 5'-phosphate + NADP(+) = 2,5-diamino-6-(1-D-ribosylamino)pyrimidin-4(3H)-one 5'-phosphate + NADPH + H(+). It catalyses the reaction 2,5-diamino-6-(1-D-ribitylamino)pyrimidin-4(3H)-one 5'-phosphate + NAD(+) = 2,5-diamino-6-(1-D-ribosylamino)pyrimidin-4(3H)-one 5'-phosphate + NADH + H(+). It participates in cofactor biosynthesis; riboflavin biosynthesis. In terms of biological role, catalyzes an early step in riboflavin biosynthesis, the NADPH-dependent reduction of the ribose side chain of 2,5-diamino-6-ribosylamino-4(3H)-pyrimidinone 5'-phosphate, yielding 2,5-diamino-6-ribitylamino-4(3H)-pyrimidinone 5'-phosphate. The chain is 2,5-diamino-6-ribosylamino-4(3H)-pyrimidinone 5'-phosphate reductase (RIB7) from Candida glabrata (strain ATCC 2001 / BCRC 20586 / JCM 3761 / NBRC 0622 / NRRL Y-65 / CBS 138) (Yeast).